The following is a 225-amino-acid chain: Uracil-DNA glycosylase (225 aa).

Catalysis depends on D65, which acts as the Proton acceptor.

The protein belongs to the uracil-DNA glycosylase (UDG) superfamily. UNG family.

It is found in the cytoplasm. It catalyses the reaction Hydrolyzes single-stranded DNA or mismatched double-stranded DNA and polynucleotides, releasing free uracil.. Its function is as follows. Excises uracil residues from the DNA which can arise as a result of misincorporation of dUMP residues by DNA polymerase or due to deamination of cytosine. The protein is Uracil-DNA glycosylase of Bacillus cereus (strain G9842).